A 302-amino-acid chain; its full sequence is Homoserine O-acetyltransferase (302 aa).

C142 serves as the catalytic Acyl-thioester intermediate. The substrate site is built by K163 and S192. The active-site Proton acceptor is the H235. E237 is an active-site residue. R249 is a binding site for substrate.

Belongs to the MetA family.

It localises to the cytoplasm. It carries out the reaction L-homoserine + acetyl-CoA = O-acetyl-L-homoserine + CoA. It functions in the pathway amino-acid biosynthesis; L-methionine biosynthesis via de novo pathway; O-acetyl-L-homoserine from L-homoserine: step 1/1. In terms of biological role, transfers an acetyl group from acetyl-CoA to L-homoserine, forming acetyl-L-homoserine. This is Homoserine O-acetyltransferase from Bacillus licheniformis (strain ATCC 14580 / DSM 13 / JCM 2505 / CCUG 7422 / NBRC 12200 / NCIMB 9375 / NCTC 10341 / NRRL NRS-1264 / Gibson 46).